The primary structure comprises 218 residues: GTP cyclohydrolase 1 (218 aa).

Zn(2+)-binding residues include Cys109, His112, and Cys180.

The protein belongs to the GTP cyclohydrolase I family. Toroid-shaped homodecamer, composed of two pentamers of five dimers.

It carries out the reaction GTP + H2O = 7,8-dihydroneopterin 3'-triphosphate + formate + H(+). Its pathway is cofactor biosynthesis; 7,8-dihydroneopterin triphosphate biosynthesis; 7,8-dihydroneopterin triphosphate from GTP: step 1/1. The sequence is that of GTP cyclohydrolase 1 (folE) from Haemophilus influenzae (strain ATCC 51907 / DSM 11121 / KW20 / Rd).